A 258-amino-acid chain; its full sequence is Acetylglutamate kinase (258 aa).

Substrate is bound by residues 44–45 (GG), Arg66, and Asn158. Residues 181-186 (DVSGIL) and 209-211 (IIT) each bind ATP.

This sequence belongs to the acetylglutamate kinase family. ArgB subfamily. Homodimer.

It localises to the cytoplasm. It carries out the reaction N-acetyl-L-glutamate + ATP = N-acetyl-L-glutamyl 5-phosphate + ADP. It participates in amino-acid biosynthesis; L-arginine biosynthesis; N(2)-acetyl-L-ornithine from L-glutamate: step 2/4. Catalyzes the ATP-dependent phosphorylation of N-acetyl-L-glutamate. The chain is Acetylglutamate kinase from Escherichia coli O6:K15:H31 (strain 536 / UPEC).